We begin with the raw amino-acid sequence, 272 residues long: Putative pyruvate, phosphate dikinase regulatory protein (272 aa).

153-160 serves as a coordination point for ADP; that stretch reads GVSRTSKT.

This sequence belongs to the pyruvate, phosphate/water dikinase regulatory protein family. PDRP subfamily.

The enzyme catalyses N(tele)-phospho-L-histidyl/L-threonyl-[pyruvate, phosphate dikinase] + ADP = N(tele)-phospho-L-histidyl/O-phospho-L-threonyl-[pyruvate, phosphate dikinase] + AMP + H(+). The catalysed reaction is N(tele)-phospho-L-histidyl/O-phospho-L-threonyl-[pyruvate, phosphate dikinase] + phosphate + H(+) = N(tele)-phospho-L-histidyl/L-threonyl-[pyruvate, phosphate dikinase] + diphosphate. Its function is as follows. Bifunctional serine/threonine kinase and phosphorylase involved in the regulation of the pyruvate, phosphate dikinase (PPDK) by catalyzing its phosphorylation/dephosphorylation. In Chelativorans sp. (strain BNC1), this protein is Putative pyruvate, phosphate dikinase regulatory protein.